The chain runs to 483 residues: E3 ubiquitin-protein ligase TRIM50 (483 aa).

The RING-type zinc-finger motif lies at 16-57 (CPICLEVFKEPLMLQCGHSYCKNCLDSLSEHLDSELRCPVCR). A B box-type zinc finger spans residues 84–125 (TEPTVCVHHRNPLSLFCEKDQEFICGLCGLLGSHQHHRVTPV). Residues Cys89, His92, Cys111, and His117 each coordinate Zn(2+). Coiled-coil stretches lie at residues 127 to 169 (TVYS…NESD) and 203 to 236 (GLVASLDMQLEQAQGTQERLAQAERVLEQFGNES). Positions 275–474 (DIKLTVWKRL…LPMVLPPPSA (200 aa)) constitute a B30.2/SPRY domain. Lys372 is subject to N6-acetyllysine.

Belongs to the TRIM/RBCC family. As to quaternary structure, can form dimers and trimers. Interacts with several E2 ubiquitin-conjugating enzymes, including UBE2L6, UBE2E1, UBE2E3. No interaction with UBE2H. Interacts with BECN1. Interacts with SQSTM1. Interacts with NLRP3. Auto-ubiquitinated. In terms of processing, acetylated by EP300 and KAT2B. HDAC6 drives TRIM50 deacetylation. Acetylation antagonizes with TRIM50 ubiquitination.

The protein localises to the cytoplasm. It catalyses the reaction S-ubiquitinyl-[E2 ubiquitin-conjugating enzyme]-L-cysteine + [acceptor protein]-L-lysine = [E2 ubiquitin-conjugating enzyme]-L-cysteine + N(6)-ubiquitinyl-[acceptor protein]-L-lysine.. Functionally, E3 ubiquitin-protein ligase that ubiquitinates Beclin-1/BECN1 in a 'Lys-63'-dependent manner enhancing its binding to ULK1. In turn, promotes starvation-induced autophagy activation. Also interacts with p62/SQSTM1 protein and thereby induces the formation and the autophagy clearance of aggresome-associated polyubiquitinated proteins through HDAC6 interaction. Also promotes NLRP3 inflammasome activation by directly inducing NLRP3 oligomerization independent of its E3 ligase function. In Rattus norvegicus (Rat), this protein is E3 ubiquitin-protein ligase TRIM50 (Trim50).